A 63-amino-acid polypeptide reads, in one-letter code: Bucandin (63 aa).

Cystine bridges form between cysteine 3-cysteine 24, cysteine 6-cysteine 11, cysteine 17-cysteine 39, cysteine 43-cysteine 55, and cysteine 56-cysteine 61.

Expressed by the venom gland.

Its subcellular location is the secreted. Functionally, this toxin is described as enhancing presynaptic acetylcholine release, but neither experimental results, nor references to other sources are available. In Bungarus candidus (Malayan krait), this protein is Bucandin.